The sequence spans 65 residues: Large ribosomal subunit protein uL30 (65 aa).

This sequence belongs to the universal ribosomal protein uL30 family. Part of the 50S ribosomal subunit.

The polypeptide is Large ribosomal subunit protein uL30 (Chloroflexus aurantiacus (strain ATCC 29366 / DSM 635 / J-10-fl)).